A 46-amino-acid polypeptide reads, in one-letter code: Myoregulin (46 aa).

Residues 1 to 21 (MSGKSWVLISTTSPQSLEDEI) lie on the Cytoplasmic side of the membrane. The helical transmembrane segment at 22 to 42 (LGRLLKILFVLFVDLMSIMYV) threads the bilayer. The Lumenal segment spans residues 43–46 (VITS).

Homooligomer. Monomer. Interacts with ATP2A1/SERCA1. Interacts as a monomer with ATP2A2/SERCA2; the interaction inhibits ATP2A2 activity. Specifically expressed in all skeletal muscles. Detected in both fast- and slow-type skeletal muscle. Not expressed in cardiac or smooth muscles.

It localises to the sarcoplasmic reticulum membrane. Functionally, inhibits the activity of ATP2A1/SERCA1 ATPase in sarcoplasmic reticulum by decreasing the apparent affinity of the ATPase for Ca(2+), thereby acting as a key regulator of skeletal muscle activity. Its high expression in adult skeletal muscle, suggests that it constitutes the predominant regulator of ATP2A1/SERCA1 in adult skeletal muscle. Also inhibits the activity of ATP2A2/SERCA2 and ATP2A3/SERCA3. This chain is Myoregulin, found in Mus musculus (Mouse).